The chain runs to 363 residues: Putative serine/threonine-protein kinase gskl-1 (363 aa).

One can recognise a Protein kinase domain in the interval 20–304 (FGAHKLCGSG…AIDVLKMPLF (285 aa)). Residues 26–34 (CGSGRFSNV) and Lys-50 contribute to the ATP site. The Proton acceptor role is filled by Asp-146. The tract at residues 311–363 (PPKKRSNGVEMPNLASYTEMHHKREPETEVVADIQTTEKAEKESDSTNEELED) is disordered. Positions 346-355 (TTEKAEKESD) are enriched in basic and acidic residues.

The protein belongs to the protein kinase superfamily. Ser/Thr protein kinase family. Expressed during multiple stages of spermatogenesis, in males and hermaphrodites (at protein level).

Its subcellular location is the cytoplasm. It is found in the cell projection. It localises to the pseudopodium. It catalyses the reaction L-seryl-[protein] + ATP = O-phospho-L-seryl-[protein] + ADP + H(+). It carries out the reaction L-threonyl-[protein] + ATP = O-phospho-L-threonyl-[protein] + ADP + H(+). Functionally, may be an autophosphorylating tyrosine kinase, a bifunctional (serine/tyrosine-specific) protein kinase, or a serine kinase that is a substrate for an associated tyrosine kinase. Acting in concert with putative serine/threonine-protein kinase gskl-2, required for sister chromatid segregation and spermatid budding during male meiosis. Plays a role in regulating female meiosis II, together with gskl-2. Involved in sperm pseudopod formation and function, together with gskl-2. This Caenorhabditis elegans protein is Putative serine/threonine-protein kinase gskl-1.